Consider the following 129-residue polypeptide: Small ribosomal subunit protein uS11 (129 aa).

The protein belongs to the universal ribosomal protein uS11 family. In terms of assembly, part of the 30S ribosomal subunit. Interacts with proteins S7 and S18. Binds to IF-3.

In terms of biological role, located on the platform of the 30S subunit, it bridges several disparate RNA helices of the 16S rRNA. Forms part of the Shine-Dalgarno cleft in the 70S ribosome. The chain is Small ribosomal subunit protein uS11 from Lacticaseibacillus casei (strain BL23) (Lactobacillus casei).